Here is a 447-residue protein sequence, read N- to C-terminus: Putative branched-chain amino acid carrier protein SE_1090 (447 aa).

12 consecutive transmembrane segments (helical) span residues 5–25, 40–60, 74–94, 114–134, 143–163, 193–213, 229–249, 290–310, 317–337, 350–370, 382–402, and 417–437; these read TWII…LIFP, ILAF…VGAL, PRFS…LFAI, GNLA…YLCL, IGSL…IKGF, GYLT…VNAI, IIAG…LGYI, LLGI…IVSV, ILPK…SFIL, VPVL…ILIA, IPLI…QGWI, and LEWF…SYFV.

The protein belongs to the branched chain amino acid transporter family.

The protein resides in the cell membrane. Component of the transport system for branched-chain amino acids (leucine, isoleucine and valine), which is coupled to a proton motive force. The protein is Putative branched-chain amino acid carrier protein SE_1090 of Staphylococcus epidermidis (strain ATCC 12228 / FDA PCI 1200).